The chain runs to 787 residues: Pyridoxal-dependent decarboxylase domain-containing protein 1 (787 aa).

Positions 29–41 (EDSQRRTEEENGK) are enriched in basic and acidic residues. The segment at 29–52 (EDSQRRTEEENGKKLLSGDIPGPL) is disordered. The residue at position 653 (serine 653) is a Phosphoserine. Residues 683 to 787 (QGSGVTPPQT…PQVEEPESLR (105 aa)) are disordered. The segment covering 685 to 697 (SGVTPPQTPTGTR) has biased composition (polar residues). Threonine 688 and threonine 692 each carry phosphothreonine. Phosphoserine is present on residues serine 711, serine 719, and serine 723. The segment covering 735-745 (QSSGGQEASEA) has biased composition (polar residues). Phosphoserine occurs at positions 747 and 785. Residues 774–787 (QDDRPQVEEPESLR) are compositionally biased toward basic and acidic residues.

It belongs to the group II decarboxylase family. Requires pyridoxal 5'-phosphate as cofactor.

The protein is Pyridoxal-dependent decarboxylase domain-containing protein 1 (PDXDC1) of Bos taurus (Bovine).